We begin with the raw amino-acid sequence, 130 residues long: Small ribosomal subunit protein uS8 (130 aa).

It belongs to the universal ribosomal protein uS8 family. Part of the 30S ribosomal subunit.

In terms of biological role, one of the primary rRNA binding proteins, it binds directly to 16S rRNA central domain where it helps coordinate assembly of the platform of the 30S subunit. The sequence is that of Small ribosomal subunit protein uS8 from Methanotorris igneus (Methanococcus igneus).